A 1517-amino-acid polypeptide reads, in one-letter code: DNA-directed RNA polymerase subunit beta' (1517 aa).

The Zn(2+) site is built by Cys71, Cys73, Cys86, and Cys89. Positions 482, 484, and 486 each coordinate Mg(2+). Residues Cys812, Cys886, Cys893, and Cys896 each coordinate Zn(2+).

This sequence belongs to the RNA polymerase beta' chain family. In terms of assembly, the RNAP catalytic core consists of 2 alpha, 1 beta, 1 beta' and 1 omega subunit. When a sigma factor is associated with the core the holoenzyme is formed, which can initiate transcription. Mg(2+) serves as cofactor. The cofactor is Zn(2+).

It carries out the reaction RNA(n) + a ribonucleoside 5'-triphosphate = RNA(n+1) + diphosphate. DNA-dependent RNA polymerase catalyzes the transcription of DNA into RNA using the four ribonucleoside triphosphates as substrates. The protein is DNA-directed RNA polymerase subunit beta' of Campylobacter jejuni subsp. jejuni serotype O:6 (strain 81116 / NCTC 11828).